The following is a 295-amino-acid chain: Bifunctional protein FolD (295 aa).

NADP(+)-binding positions include 166-168 (GRS), Ser195, and Ile236.

Belongs to the tetrahydrofolate dehydrogenase/cyclohydrolase family. As to quaternary structure, homodimer.

The catalysed reaction is (6R)-5,10-methylene-5,6,7,8-tetrahydrofolate + NADP(+) = (6R)-5,10-methenyltetrahydrofolate + NADPH. It carries out the reaction (6R)-5,10-methenyltetrahydrofolate + H2O = (6R)-10-formyltetrahydrofolate + H(+). It participates in one-carbon metabolism; tetrahydrofolate interconversion. Catalyzes the oxidation of 5,10-methylenetetrahydrofolate to 5,10-methenyltetrahydrofolate and then the hydrolysis of 5,10-methenyltetrahydrofolate to 10-formyltetrahydrofolate. The chain is Bifunctional protein FolD from Chlorobium chlorochromatii (strain CaD3).